Reading from the N-terminus, the 60-residue chain is Large ribosomal subunit protein bL32 (60 aa).

Disordered stretches follow at residues 1-22 (MAVQQNKKSPSKRGMHRSHNAL) and 34-60 (GETHLRHHISPNGFYRGRQVLKNKSEA). Residues 9 to 19 (SPSKRGMHRSH) are compositionally biased toward basic residues.

The protein belongs to the bacterial ribosomal protein bL32 family.

In Variovorax paradoxus (strain S110), this protein is Large ribosomal subunit protein bL32.